The chain runs to 294 residues: Coiled-coil domain-containing protein 69 (294 aa).

Positions 1-43 (MGCGHSRLSCCKPPKKRRQRPDQPPKPEPQELGPLNGDTATTD) are disordered. Glycine 2 carries the N-myristoyl glycine lipid modification. Residues 20 to 29 (RPDQPPKPEP) are compositionally biased toward basic and acidic residues. Residues 47-270 (ASEEAEQHQK…QEKEELLYRV (224 aa)) are a coiled coil. Residues serine 152 and serine 239 each carry the phosphoserine modification.

Belongs to the CCDC69 family.

The protein localises to the cytoplasm. The protein resides in the cytoskeleton. It localises to the spindle. It is found in the midbody. May act as a scaffold to regulate the recruitment and assembly of spindle midzone components. Required for the localization of AURKB and PLK1 to the spindle midzone. The sequence is that of Coiled-coil domain-containing protein 69 (CCDC69) from Bos taurus (Bovine).